A 534-amino-acid polypeptide reads, in one-letter code: Glycolytic genes transcriptional activator GCR2 (534 aa).

A disordered region spans residues 29 to 122 (LQSVTNSPQT…TGNNASSSAT (94 aa)). Over residues 30–43 (QSVTNSPQTTTNTP) the composition is skewed to low complexity. Residues 64–88 (SDSTPNIDEIITSTGSNALTKTNSD) are compositionally biased toward polar residues. The segment covering 89-122 (SANGTPNGNSSSTSAISNASNPATTGNNASSSAT) has biased composition (low complexity). Ser151 is modified (phosphoserine). The interval 230 to 333 (LTQGRRKGNS…SNPGTNMLFD (104 aa)) is disordered. The segment covering 238–252 (NSLNTSTKGSPSDLQ) has biased composition (polar residues). The span at 253-279 (GINNGNNNGNNGNIGNGSNIKNYGNKN) shows a compositional bias: low complexity. The short motif at 281–288 (PNNRTKKR) is the Nuclear localization signal element. Residues 295–304 (NAKNGKNNKN) show a composition bias toward low complexity. The segment covering 312–328 (ITDTSAFSNTTISNPGT) has biased composition (polar residues). Ser406 and Ser409 each carry phosphoserine. The interval 497–534 (IVQLERELELQRQETQWLRKMLIEDMGCVRSMLRDLQR) is leucine-zipper.

As to quaternary structure, homodimer via the leucine-zipper domain. Forms a complex with a GCR1 homodimer.

The protein localises to the nucleus. Its function is as follows. Transcriptional activator required for the expression of glycolytic genes. Enhances the CT box-dependent transcriptional activation of a RAP1-GCR1 complex. Required for GCR1 phosphorylation. The sequence is that of Glycolytic genes transcriptional activator GCR2 (GCR2) from Saccharomyces cerevisiae (strain ATCC 204508 / S288c) (Baker's yeast).